The chain runs to 134 residues: Profilin-3 (134 aa).

The cysteines at positions 13 and 118 are disulfide-linked. Positions 84–100 match the Involved in PIP2 interaction motif; that stretch reads AVIRGKKGSGGITIKKT. Thr114 is modified (phosphothreonine).

This sequence belongs to the profilin family. In terms of assembly, occurs in many kinds of cells as a complex with monomeric actin in a 1:1 ratio. Post-translationally, phosphorylated by MAP kinases.

The protein localises to the cytoplasm. Its subcellular location is the cytoskeleton. Functionally, binds to actin and affects the structure of the cytoskeleton. At high concentrations, profilin prevents the polymerization of actin, whereas it enhances it at low concentrations. This is Profilin-3 from Olea europaea (Common olive).